The following is a 402-amino-acid chain: Multidrug resistance protein MdtH (402 aa).

The Cytoplasmic segment spans residues 1-12 (MSRVSQARNLGK). Residues 13 to 33 (YFLLIDNMLVVLGFFVVFPLI) traverse the membrane as a helical segment. The Periplasmic segment spans residues 34–98 (SIRFVDQMGW…GFATMGIAHE (65 aa)). A helical membrane pass occupies residues 99–116 (PWLLWFSCLLSGLGGTLF). Topologically, residues 117–138 (DPPRSALVVKLIRPQQRGRFFS) are cytoplasmic. The chain crosses the membrane as a helical span at residues 139–159 (LLMMQDSASAVIGALLGSWLL). Topologically, residues 160–164 (QYDFR) are periplasmic. The chain crosses the membrane as a helical span at residues 165–185 (LVCATGAVLFVLCAAFNAWLL). Residues 186 to 213 (PAWKLSTVRTPVREGMTRVMRDKRFVTY) are Cytoplasmic-facing. Residues 214-234 (VLTLAGYYMLAVQVMLMLPIM) traverse the membrane as a helical segment. Topologically, residues 235 to 243 (VNDVAGAPS) are periplasmic. The helical transmembrane segment at 244–264 (AVKWMYAIEACLSLTLLYPIA) threads the bilayer. Residues 265-276 (RWSEKHFRLEHR) lie on the Cytoplasmic side of the membrane. A helical membrane pass occupies residues 277 to 297 (LMAGLLIMSLSMMPVGMVSGL). At 298–299 (QQ) the chain is on the periplasmic side. A helical transmembrane segment spans residues 300-320 (LFTLICLFYIGSIIAEPARET). Topologically, residues 321–339 (LSASLADARARGSYMGFSR) are cytoplasmic. A helical transmembrane segment spans residues 340–360 (LGLAIGGAIGYIGGGWLFDLG). At 361–367 (KSAHQPE) the chain is on the periplasmic side. A helical transmembrane segment spans residues 368 to 388 (LPWMMLGIIGIFTFLALGWQF). Residues 389–402 (SQKRAARRLLERDA) are Cytoplasmic-facing.

The protein belongs to the major facilitator superfamily. DHA1 family. MdtH (TC 2.A.1.2.21) subfamily.

The protein localises to the cell inner membrane. The protein is Multidrug resistance protein MdtH of Shigella flexneri.